The following is a 192-amino-acid chain: FAD-linked sulfhydryl oxidase erv2 (192 aa).

Over 1 to 8 (MILNRRIQ) the chain is Cytoplasmic. Residues 9 to 29 (VILPTLLILSFIIWIFHSVMV) traverse the membrane as a helical; Signal-anchor segment. Topologically, residues 30–192 (DKDWRLFMPE…VINEDHDYSG (163 aa)) are lumenal. The ERV/ALR sulfhydryl oxidase domain maps to 61 to 162 (HDNNTNNLMV…TSCDGFNERY (102 aa)). FAD is bound by residues W74, C138, H141, N145, and Y162. Residues C138 and C155 are joined by a disulfide bond.

The cofactor is FAD.

Its subcellular location is the endoplasmic reticulum membrane. It is found in the cytoplasm. The protein localises to the nucleus. The catalysed reaction is 2 R'C(R)SH + O2 = R'C(R)S-S(R)CR' + H2O2. FAD-dependent sulfhydryl oxidase that catalyzes disulfide bond formation in the endoplasmic reticulum lumen. This Schizosaccharomyces pombe (strain 972 / ATCC 24843) (Fission yeast) protein is FAD-linked sulfhydryl oxidase erv2 (erv2).